The chain runs to 290 residues: Ribonuclease 3 (290 aa).

In terms of domain architecture, RNase III spans 20–145 (YSCFYRILGF…FIGAIYLDRG (126 aa)). Glu62 provides a ligand contact to Mg(2+). Asp66 is an active-site residue. Residues Asn131 and Glu134 each contribute to the Mg(2+) site. Glu134 is an active-site residue. One can recognise a DRBM domain in the interval 173–242 (NFKSKLIEWS…AQMTLKKIKG (70 aa)). A disordered region spans residues 254–290 (KTQNNVPAEDTTPESEMSLTAENQQIDEIISTEEISV). Over residues 267 to 279 (ESEMSLTAENQQI) the composition is skewed to polar residues.

It belongs to the ribonuclease III family. Homodimer. The cofactor is Mg(2+).

The protein resides in the cytoplasm. It carries out the reaction Endonucleolytic cleavage to 5'-phosphomonoester.. Functionally, digests double-stranded RNA. Involved in the processing of primary rRNA transcript to yield the immediate precursors to the large and small rRNAs (23S and 16S). Processes some mRNAs, and tRNAs when they are encoded in the rRNA operon. Processes pre-crRNA and tracrRNA of type II CRISPR loci if present in the organism. This chain is Ribonuclease 3, found in Bacteroides fragilis (strain YCH46).